Here is a 108-residue protein sequence, read N- to C-terminus: uncharacterized protein (108 aa).

Residues 1–22 form the signal peptide; the sequence is MMIKQCVICLSLLVFGTTAAHA.

This is an uncharacterized protein from Bacillus subtilis (strain 168).